A 327-amino-acid polypeptide reads, in one-letter code: CREB homolog crh-1 (327 aa).

Residues Ser16 to Val75 form the KID domain. Disordered regions lie at residues Gln27–Gly114 and Lys151–Leu200. The segment covering Glu35–Asn44 has biased composition (basic and acidic residues). Ser48 carries the post-translational modification Phosphoserine. Residues Ile52 to Glu68 are compositionally biased toward basic and acidic residues. The span at Pro71–Ser84 shows a compositional bias: polar residues. Over residues Gly161–Pro172 the composition is skewed to gly residues. Positions Gly173–Ser199 are enriched in low complexity. A bZIP domain is found at Asn266–Glu317. The tract at residues Arg267 to Lys292 is basic motif. Residues Arg284–Leu318 are a coiled coil. The leucine-zipper stretch occupies residues Leu294–Leu315.

It belongs to the bZIP family. As to quaternary structure, interacts with CREB-regulated transcription coactivator homolog crtc-1. Transcriptional activity is enhanced by phosphorylation. Phosphorylated by cmk-1. As to expression, expressed widely, including in head neurons AFD, gustatory neurons ASE, the olfactory neurons AWC, and in the ASI sensory neurons, as well as in the intestine and gonads in hermaphrodites.

It is found in the nucleus. In terms of biological role, transcription factor. Transcriptional activity probably positively regulated by phosphorylation. Modulates expression of target genes, acting by binding to regulatory cAMP response elements (CRE). Acts downstream of the calcium-triggered CaMKK-CaMK1 signaling cascade, consisting of the protein kinase kinase ckk-1 and the protein kinase cmk-1. Plays a role in learning and memory, feeding behavior, stress response, entry into the dauer stage and modulation of lifespan. Involved in commitment to the developmentally arrested larval state known as dauer, acting by positively regulating the expression of dauer-inhibiting TGF-beta-like daf-7 in the ASI neurons. Plays a role in both associative and non-associative long-term memory (LTM). Involved in modulating feeding behavior, acting by regulating transcription of tryptophan hydroxylase tph-1 in serotonergic ADF neurons. Regulates transcription of genes involved in endoplasmic reticulum (ER) stress. Involved in modulation of lifespan, in response to raised temperature, but independently of the heat-shock response pathway, acting by regulating transcription of FMRFamide-like neuropeptides flp-6 in the AFD neuron. Plays a role in associative long-term memory (LTM) and learning. Its function is as follows. Plays a role in associative long-term memory (LTM) and learning; perhaps required at the time of acquisition and/or the consolidation phase of memory formation. The protein is CREB homolog crh-1 of Caenorhabditis elegans.